Consider the following 318-residue polypeptide: MERIFCVPYSLYPGYGNMLRLGQSGLSEPRQPHWRQTNVPPTFLARPRLLMPSNASDCCVDPYKRAQLMAVFSHMNPGLSLRLRKANTKDVGVQVSLRVGKSVQCSLGPRTLDSLSPWASAGHRAPASAWGVSSSVPGHWGEVRLREELSDPPEAGQPPPPLPPPSPPPRSEEDPPEELQPREELVEEDSSSPRERKSKPAPVDSSQPLGRPNFQFLEPKYGYFHCKDCKTRWESAYVWCISGTNKVYFKQLCCKCQKSFNPYRVEAIQCQTCSKSRCSCPQKKRHINLRRPHRQELCGRCKDKRFSCGSIYSFKYIM.

Residues 149 to 211 form a disordered region; that stretch reads LSDPPEAGQP…PVDSSQPLGR (63 aa). The segment covering 155–169 has biased composition (pro residues); it reads AGQPPPPLPPPSPPP. A 3CxxC-type zinc finger spans residues 219–304; sequence PKYGYFHCKD…QELCGRCKDK (86 aa).

The protein belongs to the ZAR1 family. As to quaternary structure, interacts with YBX2.

It is found in the cytoplasm. It localises to the cytoplasmic ribonucleoprotein granule. Functionally, mRNA-binding protein required for maternal mRNA storage, translation and degradation during oocyte maturation. Probably promotes formation of some phase-separated membraneless compartment that stores maternal mRNAs in oocytes: acts by undergoing liquid-liquid phase separation upon binding to maternal mRNAs. Binds to the 3'-UTR of maternal mRNAs, inhibiting their translation. This Bos taurus (Bovine) protein is ZAR1-like protein (ZAR1L).